Reading from the N-terminus, the 161-residue chain is uncharacterized protein (161 aa).

This is an uncharacterized protein from Acidianus convivator (ATV).